The chain runs to 283 residues: 5'-nucleotidase SurE (283 aa).

Residues Asp-14, Asp-15, Ser-47, and Asn-105 each contribute to the a divalent metal cation site.

Belongs to the SurE nucleotidase family. The cofactor is a divalent metal cation.

The protein localises to the cytoplasm. The enzyme catalyses a ribonucleoside 5'-phosphate + H2O = a ribonucleoside + phosphate. Functionally, nucleotidase that shows phosphatase activity on nucleoside 5'-monophosphates. The sequence is that of 5'-nucleotidase SurE from Chlamydia trachomatis serovar A (strain ATCC VR-571B / DSM 19440 / HAR-13).